The primary structure comprises 265 residues: S-antigen protein (265 aa).

A signal peptide spans 1–23 (MNRILSVTFYLFFIYLYIYETYG). A disordered region spans residues 59–265 (DLQAEGEGEN…SIKNIMNMFI (207 aa)). Acidic residues predominate over residues 60 to 86 (LQAEGEGENDKEEDSNNEEMNIDEENG). 12 consecutive repeat copies span residues 97–107 (PAKASQGGLED), 108–118 (PAKASQGGLED), 119–129 (PAKASQGGLED), 130–140 (PAKASQGGLED), 141–151 (PAKASQGGLED), 152–162 (PAKASQGGLED), 163–173 (PAKASQGGLED), 174–184 (PAKASQGGLED), 185–195 (PAKASQGGLED), 196–206 (PAKASQGGLED), 207–217 (PAKASQGGLED), and 218–228 (PAKASQGGLED). The tract at residues 97–239 (PAKASQGGLE…AKASQGGAEG (143 aa)) is 13 X 11 AA approximate tandem repeats of P-A-K-A-S-Q-G-G-L-E-D. One copy of the 13; approximate repeat lies at 229-239 (PAKASQGGAEG). The segment covering 239–257 (GHGKHAPNKENKNKNKESI) has biased composition (basic and acidic residues).

The protein resides in the parasitophorous vacuole. Functionally, s antigens are soluble heat-stable proteins present in the sera of some infected individuals. This Plasmodium falciparum (isolate FC27 / Papua New Guinea) protein is S-antigen protein.